We begin with the raw amino-acid sequence, 321 residues long: Ribonucleoside-diphosphate reductase small subunit (321 aa).

Fe cation is bound by residues D78, E108, and H111. Y115 is a catalytic residue. A helical transmembrane segment spans residues 165 to 185 (ILMILIEGLFFASSFASIAYL). The Fe cation site is built by E171, E205, and H208.

The protein belongs to the ribonucleoside diphosphate reductase small chain family. Heterotetramer composed of a homodimer of the large subunit (R1) and a homodimer of the small subunit (R2). Larger multisubunit protein complex are also active, composed of (R1)n(R2)n. The cofactor is Fe cation.

Its subcellular location is the host membrane. It carries out the reaction a 2'-deoxyribonucleoside 5'-diphosphate + [thioredoxin]-disulfide + H2O = a ribonucleoside 5'-diphosphate + [thioredoxin]-dithiol. In terms of biological role, ribonucleoside-diphosphate reductase holoenzyme provides the precursors necessary for viral DNA synthesis. Allows virus growth in non-dividing cells, as well as reactivation from latency in infected hosts. Catalyzes the biosynthesis of deoxyribonucleotides from the corresponding ribonucleotides. This chain is Ribonucleoside-diphosphate reductase small subunit, found in Equus caballus (Horse).